The sequence spans 577 residues: MLKRSFDKSKLPSRHVTEGPSRAPHRSYYYAMGMTEEEIHQPLVGVATCWNEAAPCNIALSRQAQAVKMGVKQASGTPREFTTITVTDGIAMGHEGMRSSLASREAIADTVELTMRGHCYDAIVGLAGCDKSLPGMMMAMVRLNVPSVFIYGGSILPGRLNGEDVTVQDVFEAVGKHQAGNYTDAELEVLERVACPSAGACGGQFTANTMACVSEAIGLALPNSAGAPAPYESRDQYGEASGRAVMDLIEKGIRARDIVTRKSLENAARIVACTGGSTNAGLHLPAIAHEAGIEFTLQDVCDIFRDTPYFVDLKPGGKYVAKDMYEAGGVPVVMRELRRAGLIHEDCMTVTGYSIGEELDKVTLEADGRVIYPVDTPLSTTGGVVGLEGNLAPEGAIVKIAGMSDDQLVFTGPARVFECEEDAFEAVQNRAYAEGDVFVIRNEGPAGGPGMREMLATTAALSGQGMGKKVALITDGRFSGATRGFCVGHVGPEAAHGGPIAMLKDGDMITIDALKGELSVALSEDELAARKDAWSGPRETIYASGALWKYAQLVGGARLGAVTHPGAKDEKHIYADL.

Residues Met-1–Lys-10 are compositionally biased toward basic and acidic residues. Residues Met-1–Arg-22 are disordered. Cys-56 lines the [2Fe-2S] cluster pocket. A Mg(2+)-binding site is contributed by Asp-88. Cys-129 contributes to the [2Fe-2S] cluster binding site. 2 residues coordinate Mg(2+): Asp-130 and Lys-131. An N6-carboxylysine modification is found at Lys-131. Residue Cys-201 participates in [2Fe-2S] cluster binding. Mg(2+) is bound at residue Glu-453. The active-site Proton acceptor is the Ser-479.

This sequence belongs to the IlvD/Edd family. In terms of assembly, homodimer. [2Fe-2S] cluster is required as a cofactor. Mg(2+) serves as cofactor.

It carries out the reaction (2R)-2,3-dihydroxy-3-methylbutanoate = 3-methyl-2-oxobutanoate + H2O. The catalysed reaction is (2R,3R)-2,3-dihydroxy-3-methylpentanoate = (S)-3-methyl-2-oxopentanoate + H2O. The protein operates within amino-acid biosynthesis; L-isoleucine biosynthesis; L-isoleucine from 2-oxobutanoate: step 3/4. It functions in the pathway amino-acid biosynthesis; L-valine biosynthesis; L-valine from pyruvate: step 3/4. Functionally, functions in the biosynthesis of branched-chain amino acids. Catalyzes the dehydration of (2R,3R)-2,3-dihydroxy-3-methylpentanoate (2,3-dihydroxy-3-methylvalerate) into 2-oxo-3-methylpentanoate (2-oxo-3-methylvalerate) and of (2R)-2,3-dihydroxy-3-methylbutanoate (2,3-dihydroxyisovalerate) into 2-oxo-3-methylbutanoate (2-oxoisovalerate), the penultimate precursor to L-isoleucine and L-valine, respectively. This is Dihydroxy-acid dehydratase from Dinoroseobacter shibae (strain DSM 16493 / NCIMB 14021 / DFL 12).